Reading from the N-terminus, the 297-residue chain is Large ribosomal subunit protein uL3 (297 aa).

2 disordered regions span residues Asn-124–Gln-143 and Met-258–Glu-297.

Belongs to the universal ribosomal protein uL3 family. Part of the 50S ribosomal subunit. Forms a cluster with proteins L14 and L19.

In terms of biological role, one of the primary rRNA binding proteins, it binds directly near the 3'-end of the 23S rRNA, where it nucleates assembly of the 50S subunit. The protein is Large ribosomal subunit protein uL3 of Mycoplasma mobile (strain ATCC 43663 / 163K / NCTC 11711) (Mesomycoplasma mobile).